The primary structure comprises 409 residues: Histidine--tRNA ligase (409 aa).

This sequence belongs to the class-II aminoacyl-tRNA synthetase family.

Its subcellular location is the cytoplasm. It catalyses the reaction tRNA(His) + L-histidine + ATP = L-histidyl-tRNA(His) + AMP + diphosphate + H(+). The protein is Histidine--tRNA ligase (hisS) of Archaeoglobus fulgidus (strain ATCC 49558 / DSM 4304 / JCM 9628 / NBRC 100126 / VC-16).